Here is a 602-residue protein sequence, read N- to C-terminus: Prostaglandin G/H synthase 1 (602 aa).

An N-terminal signal peptide occupies residues 1–26 (MSRRSLSLWFPLLLLLLLPPTPSVLL). The EGF-like domain maps to 34-72 (PVNPCCYYPCQNQGVCVRFGLDNYQCDCTRTGYSGPNCT). Intrachain disulfides connect Cys-38–Cys-49, Cys-39–Cys-161, Cys-43–Cys-59, and Cys-61–Cys-71. 3 N-linked (GlcNAc...) asparagine glycosylation sites follow: Asn-70, Asn-106, and Asn-146. Catalysis depends on His-209, which acts as the Proton acceptor. Residue Tyr-387 is the For cyclooxygenase activity of the active site. Residue His-390 participates in heme b binding. Cys-571 and Cys-577 are joined by a disulfide.

Belongs to the prostaglandin G/H synthase family. As to quaternary structure, homodimer. Heme b serves as cofactor.

Its subcellular location is the microsome membrane. It localises to the endoplasmic reticulum membrane. The enzyme catalyses (5Z,8Z,11Z,14Z)-eicosatetraenoate + AH2 + 2 O2 = prostaglandin H2 + A + H2O. It carries out the reaction (5Z,8Z,11Z,14Z)-eicosatetraenoate + 2 O2 = prostaglandin G2. The catalysed reaction is prostaglandin G2 + AH2 = prostaglandin H2 + A + H2O. It catalyses the reaction (9Z,12Z)-octadecadienoate + AH2 + O2 = (9R)-hydroxy-(10E,12Z)-octadecadienoate + A + H2O. The enzyme catalyses (9Z,12Z)-octadecadienoate + AH2 + O2 = (9S)-hydroxy-(10E,12Z)-octadecadienoate + A + H2O. It carries out the reaction (9Z,12Z)-octadecadienoate + AH2 + O2 = (13S)-hydroxy-(9Z,11E)-octadecadienoate + A + H2O. The catalysed reaction is (9Z,12Z)-octadecadienoate + AH2 + O2 = (13R)-hydroxy-(9Z,11E)-octadecadienoate + A + H2O. Its pathway is lipid metabolism; prostaglandin biosynthesis. Its activity is regulated as follows. The cyclooxygenase activity is inhibited by nonsteroidal anti-inflammatory drugs (NSAIDs) including ibuprofen, flurbiprofen, ketoprofen, naproxen, flurbiprofen, anirolac, fenclofenac and diclofenac. Its function is as follows. Dual cyclooxygenase and peroxidase that plays an important role in the biosynthesis pathway of prostanoids, a class of C20 oxylipins mainly derived from arachidonate ((5Z,8Z,11Z,14Z)-eicosatetraenoate, AA, C20:4(n-6)), with a particular role in the inflammatory response. The cyclooxygenase activity oxygenates AA to the hydroperoxy endoperoxide prostaglandin G2 (PGG2), and the peroxidase activity reduces PGG2 to the hydroxy endoperoxide prostaglandin H2 (PGH2), the precursor of all 2-series prostaglandins and thromboxanes. This complex transformation is initiated by abstraction of hydrogen at carbon 13 (with S-stereochemistry), followed by insertion of molecular O2 to form the endoperoxide bridge between carbon 9 and 11 that defines prostaglandins. The insertion of a second molecule of O2 (bis-oxygenase activity) yields a hydroperoxy group in PGG2 that is then reduced to PGH2 by two electrons. Involved in the constitutive production of prostanoids in particular in the stomach and platelets. In gastric epithelial cells, it is a key step in the generation of prostaglandins, such as prostaglandin E2 (PGE2), which plays an important role in cytoprotection. In platelets, it is involved in the generation of thromboxane A2 (TXA2), which promotes platelet activation and aggregation, vasoconstriction and proliferation of vascular smooth muscle cells. Can also use linoleate (LA, (9Z,12Z)-octadecadienoate, C18:2(n-6)) as substrate and produce hydroxyoctadecadienoates (HODEs) in a regio- and stereospecific manner, being (9R)-HODE ((9R)-hydroxy-(10E,12Z)-octadecadienoate) and (13S)-HODE ((13S)-hydroxy-(9Z,11E)-octadecadienoate) its major products. The chain is Prostaglandin G/H synthase 1 from Mus musculus (Mouse).